The chain runs to 171 residues: uncharacterized protein (171 aa).

Residues 3–171 (KKVAIILANE…FNREIVKQLQ (169 aa)) enclose the PfpI endopeptidase domain.

It belongs to the peptidase C56 family.

This is an uncharacterized protein from Staphylococcus aureus (strain MRSA252).